Reading from the N-terminus, the 280-residue chain is MVFDRLAGIYDATGVEFFRPVARRLLDLVDPRPGVDLLDVGCGRGAVLFPAAERVGPGGTVVGIDIAEPMVRATAAEAAERGLGTVSVRLGDGADPAFPAGSFDVVTASMSAALFPDLPAVAARYARLLRPDGRIGLTGPVPPPSLREWALGPLRVGAVVDAIAPEAVAATHPRIAALLGAHPFGAPGAVADALRAAGFVEVRELHEDLELRAPSAEALVGWTWSNGLRVYWELVEPDRRAAVAAELVRDLTAHAAGGPITATYPVAYVTGRLRPAGGTP.

The protein belongs to the methyltransferase superfamily.

The enzyme catalyses nocamycin E + S-adenosyl-L-methionine = nocamycin I + S-adenosyl-L-homocysteine. It functions in the pathway antibiotic biosynthesis. Its function is as follows. Involved in the biosynthesis of nocamycin I and nocamycin II. Catalyzes the methylation of nocamycin E to yield nocamycin I. In Saccharothrix syringae (Nocardiopsis syringae), this protein is Nocamycin O-methyltransferase.